The chain runs to 175 residues: MEHVVIVDPEGQRVGTEEKIRAHADGGTLHLAFCVFVFNPRGELLLQRRADSKYHFSGLWSNTCCGHPRPGEGVTEAAERRLGEEFGFVTRLHPVAQFTYHAEDHHTGLAEYEYAHVLIGRAPTDQPAPDPLEIGAWEWAAPLRIQADTQQYPLRYTPWFRRLIQEQPVADWATG.

Mn(2+) contacts are provided by H23 and H30. In terms of domain architecture, Nudix hydrolase spans 28–162 (TLHLAFCVFV…PLRYTPWFRR (135 aa)). Residue C65 is part of the active site. Mn(2+) is bound at residue H67. Mg(2+) is bound at residue E85. Mn(2+) contacts are provided by E111 and E113. The active site involves E113.

It belongs to the IPP isomerase type 1 family. The cofactor is Mg(2+). Mn(2+) is required as a cofactor.

The protein localises to the cytoplasm. The enzyme catalyses isopentenyl diphosphate = dimethylallyl diphosphate. It functions in the pathway isoprenoid biosynthesis; dimethylallyl diphosphate biosynthesis; dimethylallyl diphosphate from isopentenyl diphosphate: step 1/1. In terms of biological role, catalyzes the 1,3-allylic rearrangement of the homoallylic substrate isopentenyl (IPP) to its highly electrophilic allylic isomer, dimethylallyl diphosphate (DMAPP). The polypeptide is Isopentenyl-diphosphate Delta-isomerase (Halorhodospira halophila (strain DSM 244 / SL1) (Ectothiorhodospira halophila (strain DSM 244 / SL1))).